A 198-amino-acid polypeptide reads, in one-letter code: Bcl-2-like protein 11 (198 aa).

The interval 1-72 is disordered; that stretch reads MAKQPSDVSS…PLAPPASPGP (72 aa). Serine 69 bears the Phosphoserine; by MAPK mark. Residues serine 77, serine 87, and serine 94 each carry the phosphoserine modification. The short motif at 148-162 is the BH3 element; it reads IAQELRRIGDEFNAY.

This sequence belongs to the Bcl-2 family. In terms of assembly, forms heterodimers with a number of antiapoptotic Bcl-2 proteins, including MCL1, BCL2, BCL2L1 isoform Bcl-X(L), BCL2A1/BFL-1, BHRF1, and BCL2L2/BCLW. Does not heterodimerize with proapoptotic proteins such as BAD, BOK or BAK. Identified in a complex containing BCL2L11, DYNLL1 and BCL2L1 isoform Bcl-X(L); BH3 integrity is required for BCL2L1-binding. Interacts with YWHAZ. When phosphorylated, interacts with TRIM2; this interaction is associated with ubiquitination and degradation. Interacts with MCL1; may sequester BCL2L11 to prevent its pro-apoptotic activity. Interacts with GIMAP5. Interacts with BCL2L10/BCL-B. Interacts (when phosphorylated) with USP27X; the interaction leads to BCL2L11 deubiquitination and stabilization. Interacts with humanin; the interaction prevents BIM-induced apoptosis. As to quaternary structure, does not interact with humanin. In terms of assembly, interacts with BAX; the interaction may lead to BAX activation through conformational change. Does not interact with humanin. Interacts with BAX; the interaction may lead to BAX activation through conformational change. Post-translationally, phosphorylation at Ser-69 by MAPK1/MAPK3 leads to interaction with TRIM2 and polyubiquitination, followed by proteasomal degradation. Deubiquitination catalyzed by USP27X stabilizes the protein. In terms of processing, ubiquitination by TRIM2 following phosphorylation by MAPK1/MAPK3 leads to proteasomal degradation. Conversely, deubiquitination catalyzed by USP27X stabilizes the protein. Isoform BimEL, isoform BimL and isoform BimS are the predominant isoforms and are widely expressed with tissue-specific variation. Isoform Bim-gamma is most abundantly expressed in small intestine and colon, and in lower levels in spleen, prostate, testis, heart, liver and kidney.

It localises to the endomembrane system. The protein resides in the mitochondrion. Its function is as follows. Induces apoptosis and anoikis. Isoform BimL is more potent than isoform BimEL. Isoform Bim-alpha1, isoform Bim-alpha2 and isoform Bim-alpha3 induce apoptosis, although less potent than isoform BimEL, isoform BimL and isoform BimS. Isoform Bim-gamma induces apoptosis. Isoform Bim-alpha3 induces apoptosis possibly through a caspase-mediated pathway. Isoform BimAC and isoform BimABC lack the ability to induce apoptosis. This Homo sapiens (Human) protein is Bcl-2-like protein 11 (BCL2L11).